Reading from the N-terminus, the 554-residue chain is Valerianol synthase TPS1A (554 aa).

Residues Asp307 and Asp311 each contribute to the Mg(2+) site. Positions 326-330 (VQRWD) match the DDXXD motif motif. Mg(2+) is bound by residues Asp452, Ser456, and Glu460.

The protein belongs to the terpene synthase family. Mg(2+) is required as a cofactor. As to expression, expressed in flowers.

It catalyses the reaction (2E,6E)-farnesyl diphosphate + H2O = valerianol + diphosphate. The protein operates within secondary metabolite biosynthesis; terpenoid biosynthesis. Functionally, terpene synthase that catalyzes the biosynthesis of the terpene valerianol, which is a volatile compound of floral scent. The polypeptide is Valerianol synthase TPS1A (Camellia hiemalis (Camellia)).